A 408-amino-acid chain; its full sequence is Succinylornithine transaminase (408 aa).

An N6-(pyridoxal phosphate)lysine modification is found at K252.

Belongs to the class-III pyridoxal-phosphate-dependent aminotransferase family. AstC subfamily. Requires pyridoxal 5'-phosphate as cofactor.

It catalyses the reaction N(2)-succinyl-L-ornithine + 2-oxoglutarate = N-succinyl-L-glutamate 5-semialdehyde + L-glutamate. It functions in the pathway amino-acid degradation; L-arginine degradation via AST pathway; L-glutamate and succinate from L-arginine: step 3/5. Its function is as follows. Catalyzes the transamination of N(2)-succinylornithine and alpha-ketoglutarate into N(2)-succinylglutamate semialdehyde and glutamate. Can also act as an acetylornithine aminotransferase. This chain is Succinylornithine transaminase, found in Salmonella typhimurium (strain LT2 / SGSC1412 / ATCC 700720).